Here is a 370-residue protein sequence, read N- to C-terminus: uncharacterized protein (370 aa).

Residues 62–293 (ATVALVGFPS…LKERMWRALG (232 aa)) form the OBG-type G domain. GTP is bound by residues 68–75 (GFPSVGKS), 114–118 (DVPGL), and 243–246 (NKVD). Residues 293–368 (GLIRIYMDKP…EDEDVLRVVA (76 aa)) enclose the TGS domain.

The protein belongs to the TRAFAC class OBG-HflX-like GTPase superfamily. OBG GTPase family.

This is an uncharacterized protein from Halobacterium salinarum (strain ATCC 700922 / JCM 11081 / NRC-1) (Halobacterium halobium).